Here is a 193-residue protein sequence, read N- to C-terminus: dTTP/UTP pyrophosphatase (193 aa).

Aspartate 73 serves as the catalytic Proton acceptor.

Belongs to the Maf family. YhdE subfamily. A divalent metal cation is required as a cofactor.

The protein resides in the cytoplasm. The enzyme catalyses dTTP + H2O = dTMP + diphosphate + H(+). It carries out the reaction UTP + H2O = UMP + diphosphate + H(+). Functionally, nucleoside triphosphate pyrophosphatase that hydrolyzes dTTP and UTP. May have a dual role in cell division arrest and in preventing the incorporation of modified nucleotides into cellular nucleic acids. The protein is dTTP/UTP pyrophosphatase of Caulobacter vibrioides (strain ATCC 19089 / CIP 103742 / CB 15) (Caulobacter crescentus).